A 351-amino-acid polypeptide reads, in one-letter code: Phosphoribosylformylglycinamidine cyclo-ligase (351 aa).

The protein belongs to the AIR synthase family.

The protein resides in the cytoplasm. The catalysed reaction is 2-formamido-N(1)-(5-O-phospho-beta-D-ribosyl)acetamidine + ATP = 5-amino-1-(5-phospho-beta-D-ribosyl)imidazole + ADP + phosphate + H(+). The protein operates within purine metabolism; IMP biosynthesis via de novo pathway; 5-amino-1-(5-phospho-D-ribosyl)imidazole from N(2)-formyl-N(1)-(5-phospho-D-ribosyl)glycinamide: step 2/2. In Xylella fastidiosa (strain Temecula1 / ATCC 700964), this protein is Phosphoribosylformylglycinamidine cyclo-ligase.